Reading from the N-terminus, the 254-residue chain is Probable septum site-determining protein MinC (254 aa).

The protein belongs to the MinC family. Interacts with MinD and FtsZ.

Its function is as follows. Cell division inhibitor that blocks the formation of polar Z ring septums. Rapidly oscillates between the poles of the cell to destabilize FtsZ filaments that have formed before they mature into polar Z rings. Prevents FtsZ polymerization. In Burkholderia ambifaria (strain ATCC BAA-244 / DSM 16087 / CCUG 44356 / LMG 19182 / AMMD) (Burkholderia cepacia (strain AMMD)), this protein is Probable septum site-determining protein MinC.